We begin with the raw amino-acid sequence, 125 residues long: Photoactive yellow protein (125 aa).

The region spanning leucine 23–glycine 86 is the PAS domain. Position 69 is an S-(4-hydroxycinnamyl)cysteine (cysteine 69).

It belongs to the photoactive yellow protein family. In terms of processing, the 4-hydroxycinnamic acid (p-coumaric acid) chromophore is covalently bound via a thioester linkage.

Its function is as follows. Photoactive blue light protein. Probably functions as a photoreceptor for a negative phototaxis response. This Halochromatium salexigens (Chromatium salexigens) protein is Photoactive yellow protein (pyp).